A 294-amino-acid chain; its full sequence is Non-selective voltage-gated ion channel VDAC2 (294 aa).

Residue Ala-2 is modified to N-acetylalanine. 2 residues coordinate ATP: Lys-23 and Lys-31. Lys-31 bears the N6-acetyllysine; alternate mark. Lys-31 carries the N6-succinyllysine; alternate modification. Lys-31 participates in a covalent cross-link: Glycyl lysine isopeptide (Lys-Gly) (interchain with G-Cter in ubiquitin); alternate. 2 consecutive transmembrane segments (beta stranded) span residues 37-46 (LVKLDVKTKS) and 50-58 (VEFSTSGSS). Lys-64 is covalently cross-linked (Glycyl lysine isopeptide (Lys-Gly) (interchain with G-Cter in ubiquitin)). The beta stranded transmembrane segment at 65–75 (VTGTLETKYKW) threads the bilayer. Tyr-78 is subject to Phosphotyrosine. The next 3 beta stranded transmembrane spans lie at 80–87 (LTFTEKWN), 91–100 (TLGTEIAIED), and 106–115 (LKLTFDTTFS). Phosphothreonine is present on Thr-118. N6-acetyllysine; alternate is present on Lys-120. Residue Lys-120 forms a Glycyl lysine isopeptide (Lys-Gly) (interchain with G-Cter in ubiquitin); alternate linkage. A Glycyl lysine isopeptide (Lys-Gly) (interchain with G-Cter in ubiquitin) cross-link involves residue Lys-121. The next 4 beta stranded transmembrane spans lie at 122–131 (SGKIKSSYKR), 134–141 (VNLGCDVD), 148–156 (AIHGSAVFG), and 161–169 (LAGYQMTFD). Lys-172 is covalently cross-linked (Glycyl lysine isopeptide (Lys-Gly) (interchain with G-Cter in ubiquitin)). 6 beta stranded membrane passes run 174 to 186 (KLTR…GYRT), 189 to 196 (FQLHTNVN), 200 to 209 (EFGGSIYQKV), 213 to 222 (LDTSVNLAWT), 229 to 238 (RFGIAAKYQL), and 242 to 249 (ASISAKVN). Position 251 is a phosphoserine (Ser-251). Residues 253–255 (LIG) and 271–275 (SALVD) contribute to the NAD(+) site. 2 consecutive transmembrane segments (beta stranded) span residues 253–262 (LIGVGYTQTL) and 265–274 (GVKLTLSALV). Lys-277 is subject to N6-acetyllysine; alternate. A Glycyl lysine isopeptide (Lys-Gly) (interchain with G-Cter in ubiquitin); alternate cross-link involves residue Lys-277. A beta stranded transmembrane segment spans residues 284–293 (HKLGLALELE).

This sequence belongs to the eukaryotic mitochondrial porin family. In terms of assembly, monomer, homodimer and higher order oligomers; formation of higher order structures is necessary for scramblase activity. Interacts with ARMC12 in a TBC1D21-dependent manner. Interacts with KLC3. Interacts with SPATA33. Interacts with PPP3CC in a SPATA33-dependent manner. Post-translationally, ubiquitinated by PRKN during mitophagy, leading to its degradation and enhancement of mitophagy. Deubiquitinated by USP30.

The protein resides in the mitochondrion outer membrane. It localises to the membrane. It carries out the reaction chloride(in) = chloride(out). The enzyme catalyses K(+)(in) = K(+)(out). It catalyses the reaction a 1,2-diacyl-sn-glycero-3-phospho-L-serine(in) = a 1,2-diacyl-sn-glycero-3-phospho-L-serine(out). The catalysed reaction is a 1,2-diacyl-sn-glycero-3-phosphocholine(in) = a 1,2-diacyl-sn-glycero-3-phosphocholine(out). It carries out the reaction a 1,2-diacyl-sn-glycero-3-phospho-(1D-myo-inositol)(in) = a 1,2-diacyl-sn-glycero-3-phospho-(1D-myo-inositol)(out). Its function is as follows. Non-selective voltage-gated ion channel that mediates the transport of anions and cations through the mitochondrion outer membrane and plasma membrane. The channel adopts an open conformation at zero mV and a closed conformation at both positive and negative potentials. There are two populations of channels; the main that functions in a lower open-state conductance with lower ion selectivity, that switch, in a voltage-dependent manner, from the open to a low-conducting 'closed' state and the other that has a normal ion selectivity in the typical high conductance, 'open' state. Binds various lipids, including the sphingolipid ceramide, the phospholipid phosphatidylcholine, and the sterols cholesterol and oxysterol. Binding of ceramide promotes the mitochondrial outer membrane permeabilization (MOMP) apoptotic pathway. Functionally, catalyzes the scrambling of phospholipids across the outer mitochondrial membrane; the mechanism is unrelated to channel activity and is capable of translocating both anionic and zwitterionic phospholipids. The chain is Non-selective voltage-gated ion channel VDAC2 from Sus scrofa (Pig).